We begin with the raw amino-acid sequence, 311 residues long: Ketoisovalerate oxidoreductase subunit VorB (311 aa).

In terms of assembly, heterotetramer of one alpha, one beta, one delta and one gamma chain.

It carries out the reaction 3-methyl-2-oxobutanoate + 2 oxidized [2Fe-2S]-[ferredoxin] + CoA = 2-methylpropanoyl-CoA + 2 reduced [2Fe-2S]-[ferredoxin] + CO2 + H(+). The sequence is that of Ketoisovalerate oxidoreductase subunit VorB (vorB) from Pyrococcus horikoshii (strain ATCC 700860 / DSM 12428 / JCM 9974 / NBRC 100139 / OT-3).